We begin with the raw amino-acid sequence, 221 residues long: Interleukin-12 subunit alpha (221 aa).

The signal sequence occupies residues 1–25 (MCPLRSLLLISTLVLLHHLPHLSLG). Intrachain disulfides connect Cys39–Cys112, Cys66–Cys198, and Cys87–Cys125. An N-linked (GlcNAc...) asparagine glycan is attached at Asn95.

It belongs to the IL-6 superfamily. In terms of assembly, heterodimer with IL12B; disulfide-linked. This heterodimer is known as interleukin IL-12. Heterodimer with EBI3/IL27B; not disulfide-linked. This heterodimer is known as interleukin IL-35. Interacts with NBR1; this interaction promotes IL-12 secretion.

Its subcellular location is the secreted. Functionally, heterodimerizes with IL12B to form the IL-12 cytokine or with EBI3/IL27B to form the IL-35 cytokine. IL-12 is primarily produced by professional antigen-presenting cells (APCs) such as B-cells and dendritic cells (DCs) as well as macrophages and granulocytes and regulates T-cell and natural killer-cell responses, induces the production of interferon-gamma (IFN-gamma), favors the differentiation of T-helper 1 (Th1) cells and is an important link between innate resistance and adaptive immunity. Mechanistically, exerts its biological effects through a receptor composed of IL12R1 and IL12R2 subunits. Binding to the receptor results in the rapid tyrosine phosphorylation of a number of cellular substrates including the JAK family kinases TYK2 and JAK2. In turn, recruited STAT4 gets phosphorylated and translocates to the nucleus where it regulates cytokine/growth factor responsive genes. As part of IL-35, plays essential roles in maintaining the immune homeostasis of the liver microenvironment and also functions as an immune-suppressive cytokine. Mediates biological events through unconventional receptors composed of IL12RB2 and gp130/IL6ST heterodimers or homodimers. Signaling requires the transcription factors STAT1 and STAT4, which form a unique heterodimer that binds to distinct DNA sites. The sequence is that of Interleukin-12 subunit alpha (IL12A) from Ovis aries (Sheep).